Here is a 641-residue protein sequence, read N- to C-terminus: 1,3-beta-glucanosyltransferase PGA5 (641 aa).

The first 23 residues, Met-1–Ser-23, serve as a signal peptide directing secretion. N-linked (GlcNAc...) asparagine glycosylation occurs at Asn-25. An intrachain disulfide couples Cys-106 to Cys-135. The (1,3-beta-D-glucosyl)n site is built by Tyr-124, Asn-192, Glu-193, Asp-234, and Arg-239. Glu-193 (proton donor) is an active-site residue. 6 cysteine pairs are disulfide-bonded: Cys-248–Cys-390, Cys-276–Cys-307, Cys-424–Cys-474, Cys-426–Cys-528, Cys-433–Cys-498, and Cys-451–Cys-456. The active-site Nucleophile is Glu-304. Tyr-336 provides a ligand contact to (1,3-beta-D-glucosyl)n. The segment at Lys-535–Gly-613 is disordered. Positions Lys-571 to Ile-581 are enriched in basic and acidic residues. The segment covering Glu-582–Glu-593 has biased composition (acidic residues). Residues Lys-596 to Ser-610 are compositionally biased toward polar residues. Residue Asn-621 is glycosylated (N-linked (GlcNAc...) asparagine). Residue Asp-622 is the site of GPI-anchor amidated aspartate attachment. Residues Ser-623–Ile-641 constitute a propeptide, removed in mature form.

This sequence belongs to the glycosyl hydrolase 72 family.

The protein resides in the cell membrane. In terms of biological role, splits internally a 1,3-beta-glucan molecule and transfers the newly generated reducing end (the donor) to the non-reducing end of another 1,3-beta-glucan molecule (the acceptor) forming a 1,3-beta linkage, resulting in the elongation of 1,3-beta-glucan chains in the cell wall. Involved in spore wall assembly. The chain is 1,3-beta-glucanosyltransferase PGA5 (PGA5) from Candida albicans (strain SC5314 / ATCC MYA-2876) (Yeast).